The following is a 269-amino-acid chain: MSNKVHLGHTARKRFGQNFLTDSNVINRIVGAISPDNDHVMVEIGPGLAALTEPVAESIDKLTVVELDKDLVERLQTHPFLKDKLEIHQGDALKFDFKQLVEEGKQMKVFGNLPYNISTPLMFHLFEFAEHIENMHFMLQKEVVLRLSAAPGTKAYGRLTVMAQYFCQVMPVLEVPPGCFTPPPKVDSAVVRLVPYKEKPYPCKDVDLLRHLCTTAFNMRRKTLRNNLKQLLNDDDFSALGIDASMRPEQITVQQYVAMANHLVDKRQA.

Residues N18, L20, G45, E66, D91, and N112 each coordinate S-adenosyl-L-methionine.

It belongs to the class I-like SAM-binding methyltransferase superfamily. rRNA adenine N(6)-methyltransferase family. RsmA subfamily.

It is found in the cytoplasm. It catalyses the reaction adenosine(1518)/adenosine(1519) in 16S rRNA + 4 S-adenosyl-L-methionine = N(6)-dimethyladenosine(1518)/N(6)-dimethyladenosine(1519) in 16S rRNA + 4 S-adenosyl-L-homocysteine + 4 H(+). In terms of biological role, specifically dimethylates two adjacent adenosines (A1518 and A1519) in the loop of a conserved hairpin near the 3'-end of 16S rRNA in the 30S particle. May play a critical role in biogenesis of 30S subunits. The protein is Ribosomal RNA small subunit methyltransferase A of Shewanella loihica (strain ATCC BAA-1088 / PV-4).